A 425-amino-acid polypeptide reads, in one-letter code: Serine--tRNA ligase (425 aa).

Residue threonine 231 to glutamate 233 participates in L-serine binding. Arginine 262–glutamate 264 is an ATP binding site. An L-serine-binding site is contributed by glutamate 285. Glutamate 349–serine 352 contributes to the ATP binding site. Residue serine 385 coordinates L-serine.

It belongs to the class-II aminoacyl-tRNA synthetase family. Type-1 seryl-tRNA synthetase subfamily. Homodimer. The tRNA molecule binds across the dimer.

It is found in the cytoplasm. It carries out the reaction tRNA(Ser) + L-serine + ATP = L-seryl-tRNA(Ser) + AMP + diphosphate + H(+). It catalyses the reaction tRNA(Sec) + L-serine + ATP = L-seryl-tRNA(Sec) + AMP + diphosphate + H(+). Its pathway is aminoacyl-tRNA biosynthesis; selenocysteinyl-tRNA(Sec) biosynthesis; L-seryl-tRNA(Sec) from L-serine and tRNA(Sec): step 1/1. Catalyzes the attachment of serine to tRNA(Ser). Is also able to aminoacylate tRNA(Sec) with serine, to form the misacylated tRNA L-seryl-tRNA(Sec), which will be further converted into selenocysteinyl-tRNA(Sec). The polypeptide is Serine--tRNA ligase (Desulfosudis oleivorans (strain DSM 6200 / JCM 39069 / Hxd3) (Desulfococcus oleovorans)).